The primary structure comprises 20 residues: Cytochrome c oxidase subunit 6A1, mitochondrial (20 aa).

The protein belongs to the cytochrome c oxidase subunit 6A family. As to quaternary structure, component of the cytochrome c oxidase (complex IV, CIV), a multisubunit enzyme composed of 14 subunits. The complex is composed of a catalytic core of 3 subunits MT-CO1, MT-CO2 and MT-CO3, encoded in the mitochondrial DNA, and 11 supernumerary subunits COX4I, COX5A, COX5B, COX6A, COX6B, COX6C, COX7A, COX7B, COX7C, COX8 and NDUFA4, which are encoded in the nuclear genome. The complex exists as a monomer or a dimer and forms supercomplexes (SCs) in the inner mitochondrial membrane with NADH-ubiquinone oxidoreductase (complex I, CI) and ubiquinol-cytochrome c oxidoreductase (cytochrome b-c1 complex, complex III, CIII), resulting in different assemblies (supercomplex SCI(1)III(2)IV(1) and megacomplex MCI(2)III(2)IV(2)). As to expression, liver specific isoform.

Its subcellular location is the mitochondrion inner membrane. It functions in the pathway energy metabolism; oxidative phosphorylation. Component of the cytochrome c oxidase, the last enzyme in the mitochondrial electron transport chain which drives oxidative phosphorylation. The respiratory chain contains 3 multisubunit complexes succinate dehydrogenase (complex II, CII), ubiquinol-cytochrome c oxidoreductase (cytochrome b-c1 complex, complex III, CIII) and cytochrome c oxidase (complex IV, CIV), that cooperate to transfer electrons derived from NADH and succinate to molecular oxygen, creating an electrochemical gradient over the inner membrane that drives transmembrane transport and the ATP synthase. Cytochrome c oxidase is the component of the respiratory chain that catalyzes the reduction of oxygen to water. Electrons originating from reduced cytochrome c in the intermembrane space (IMS) are transferred via the dinuclear copper A center (CU(A)) of subunit 2 and heme A of subunit 1 to the active site in subunit 1, a binuclear center (BNC) formed by heme A3 and copper B (CU(B)). The BNC reduces molecular oxygen to 2 water molecules unsing 4 electrons from cytochrome c in the IMS and 4 protons from the mitochondrial matrix. The protein is Cytochrome c oxidase subunit 6A1, mitochondrial (COX6A1) of Ovis aries (Sheep).